We begin with the raw amino-acid sequence, 245 residues long: Putative insertion sequence ATP-binding protein y4pL (245 aa).

Gly106 to Ser113 provides a ligand contact to ATP.

It belongs to the IS21/IS1162 putative ATP-binding protein family.

The chain is Putative insertion sequence ATP-binding protein y4pL from Sinorhizobium fredii (strain NBRC 101917 / NGR234).